The sequence spans 179 residues: Large ribosomal subunit protein uL6 (179 aa).

This sequence belongs to the universal ribosomal protein uL6 family. In terms of assembly, part of the 50S ribosomal subunit.

This protein binds to the 23S rRNA, and is important in its secondary structure. It is located near the subunit interface in the base of the L7/L12 stalk, and near the tRNA binding site of the peptidyltransferase center. This Prochlorococcus marinus (strain MIT 9211) protein is Large ribosomal subunit protein uL6.